The following is a 366-amino-acid chain: uncharacterized protein (366 aa).

Positions 59–222 constitute a CP-type G domain; that stretch reads LNILHGIGET…LYDTPGIINN (164 aa).

This sequence belongs to the TRAFAC class YlqF/YawG GTPase family.

Functionally, binds GTP and GDP. This is an uncharacterized protein from Bacillus subtilis (strain 168).